The sequence spans 2511 residues: Fatty acid synthase (2511 aa).

Met1 is modified (N-acetylmethionine). The Ketosynthase family 3 (KS3) domain occupies Met1–Pro406. The residue at position 63 (Ser63) is a Phosphoserine. Residue Lys70 is modified to N6-acetyllysine. The active-site For beta-ketoacyl synthase activity is Cys161. Ser207 is subject to Phosphoserine. Catalysis depends on His293, which acts as the For beta-ketoacyl synthase activity. Lys298 is subject to N6-acetyllysine. The For beta-ketoacyl synthase activity role is filled by His331. The interval Arg429–Pro817 is acyl and malonyl transferases. N6-acetyllysine is present on residues Lys436 and Lys528. Ser581 functions as the For malonyltransferase activity in the catalytic mechanism. An acyl-CoA contacts are provided by residues Asp647–Thr648 and Phe671. Lys673 carries the post-translational modification N6-acetyllysine. A Phosphoserine modification is found at Ser725. Position 773 (Arg773) interacts with an acyl-CoA. Residues His838 to Pro966 form an N-terminal hotdog fold region. Positions His838–Glu1108 constitute a PKS/mFAS DH domain. The Proton acceptor; for dehydratase activity role is filled by His878. The segment at Glu981–Glu1108 is C-terminal hotdog fold. Position 992 is an N6-acetyllysine (Lys992). Asp1031 (proton donor; for dehydratase activity) is an active-site residue. Residues Ser1174 and Ser1411 each carry the phosphoserine modification. Cys1471 carries the S-nitrosocysteine modification. Ser1584 and Ser1594 each carry phosphoserine. The interval Asp1635–Ala1863 is enoyl reductase. Position 1671-1688 (Leu1671–Ala1688) interacts with NADP(+). Lys1704 is modified (N6-(pyridoxal phosphate)lysine; alternate). At Lys1704 the chain carries N6-acetyllysine; alternate. N6-acetyllysine occurs at positions 1771 and 1847. The segment at Val1864–Tyr2118 is beta-ketoacyl reductase. An NADP(+)-binding site is contributed by Ser1886–Ala1901. Lys1995 is subject to N6-acetyllysine. Cys2091 is subject to S-nitrosocysteine. One can recognise a Carrier domain in the interval Arg2121–Ser2198. Residue Ser2156 is modified to O-(pantetheine 4'-phosphoryl)serine; alternate. Phosphoserine; alternate is present on Ser2156. At Ser2198 the chain carries Phosphoserine. 2 positions are modified to phosphothreonine: Thr2204 and Thr2215. A thioesterase region spans residues Glu2207–Gly2511. Ser2236 is subject to Phosphoserine. Ser2308 acts as the For thioesterase activity in catalysis. Lys2391 carries the N6-acetyllysine modification. Lys2449 is covalently cross-linked (Glycyl lysine isopeptide (Lys-Gly) (interchain with G-Cter in SUMO2)). The active-site For thioesterase activity is His2481.

In terms of assembly, homodimer which is arranged in a head to tail fashion. Interacts with CEACAM1; this interaction is insulin and phosphorylation-dependent; reduces fatty-acid synthase activity. In terms of processing, S-nitrosylation of Fatty acid synthase at cysteine residues Cys-1471 or Cys-2091 is important for the enzyme dimerization. In adipocytes, S-nitrosylation of Fatty acid synthase occurs under physiological conditions and gradually increases during adipogenesis. In terms of tissue distribution, ubiquitous. Prominent expression in brain, lung, liver and mammary gland.

It is found in the cytoplasm. The protein resides in the melanosome. The catalysed reaction is acetyl-CoA + n malonyl-CoA + 2n NADPH + 2n H(+) = a long-chain fatty acid + (n+1) CoA + n CO2 + 2n NADP(+).. The enzyme catalyses holo-[ACP] + acetyl-CoA = acetyl-[ACP] + CoA. It catalyses the reaction holo-[ACP] + malonyl-CoA = malonyl-[ACP] + CoA. It carries out the reaction a fatty acyl-[ACP] + malonyl-[ACP] + H(+) = a 3-oxoacyl-[ACP] + holo-[ACP] + CO2. The catalysed reaction is a (3R)-hydroxyacyl-[ACP] + NADP(+) = a 3-oxoacyl-[ACP] + NADPH + H(+). The enzyme catalyses a (3R)-hydroxyacyl-[ACP] = a (2E)-enoyl-[ACP] + H2O. It catalyses the reaction a 2,3-saturated acyl-[ACP] + NADP(+) = a (2E)-enoyl-[ACP] + NADPH + H(+). It carries out the reaction hexadecanoyl-[ACP] + H2O = hexadecanoate + holo-[ACP] + H(+). The catalysed reaction is acetyl-[ACP] + malonyl-[ACP] + H(+) = 3-oxobutanoyl-[ACP] + holo-[ACP] + CO2. The enzyme catalyses 3-oxobutanoyl-[ACP] + NADPH + H(+) = (3R)-hydroxybutanoyl-[ACP] + NADP(+). It catalyses the reaction (3R)-hydroxybutanoyl-[ACP] = (2E)-butenoyl-[ACP] + H2O. It carries out the reaction (2E)-butenoyl-[ACP] + NADPH + H(+) = butanoyl-[ACP] + NADP(+). The catalysed reaction is butanoyl-[ACP] + malonyl-[ACP] + H(+) = 3-oxohexanoyl-[ACP] + holo-[ACP] + CO2. The enzyme catalyses 3-oxohexanoyl-[ACP] + NADPH + H(+) = (3R)-hydroxyhexanoyl-[ACP] + NADP(+). It catalyses the reaction (3R)-hydroxyhexanoyl-[ACP] = (2E)-hexenoyl-[ACP] + H2O. It carries out the reaction (2E)-hexenoyl-[ACP] + NADPH + H(+) = hexanoyl-[ACP] + NADP(+). The catalysed reaction is hexanoyl-[ACP] + malonyl-[ACP] + H(+) = 3-oxooctanoyl-[ACP] + holo-[ACP] + CO2. The enzyme catalyses 3-oxooctanoyl-[ACP] + NADPH + H(+) = (3R)-hydroxyoctanoyl-[ACP] + NADP(+). It catalyses the reaction (3R)-hydroxyoctanoyl-[ACP] = (2E)-octenoyl-[ACP] + H2O. It carries out the reaction (2E)-octenoyl-[ACP] + NADPH + H(+) = octanoyl-[ACP] + NADP(+). The catalysed reaction is octanoyl-[ACP] + malonyl-[ACP] + H(+) = 3-oxodecanoyl-[ACP] + holo-[ACP] + CO2. The enzyme catalyses 3-oxodecanoyl-[ACP] + NADPH + H(+) = (3R)-hydroxydecanoyl-[ACP] + NADP(+). It catalyses the reaction (3R)-hydroxydecanoyl-[ACP] = (2E)-decenoyl-[ACP] + H2O. It carries out the reaction (2E)-decenoyl-[ACP] + NADPH + H(+) = decanoyl-[ACP] + NADP(+). The catalysed reaction is decanoyl-[ACP] + malonyl-[ACP] + H(+) = 3-oxododecanoyl-[ACP] + holo-[ACP] + CO2. The enzyme catalyses 3-oxododecanoyl-[ACP] + NADPH + H(+) = (3R)-hydroxydodecanoyl-[ACP] + NADP(+). It catalyses the reaction (3R)-hydroxydodecanoyl-[ACP] = (2E)-dodecenoyl-[ACP] + H2O. It carries out the reaction (2E)-dodecenoyl-[ACP] + NADPH + H(+) = dodecanoyl-[ACP] + NADP(+). The catalysed reaction is dodecanoyl-[ACP] + malonyl-[ACP] + H(+) = 3-oxotetradecanoyl-[ACP] + holo-[ACP] + CO2. The enzyme catalyses 3-oxotetradecanoyl-[ACP] + NADPH + H(+) = (3R)-hydroxytetradecanoyl-[ACP] + NADP(+). It catalyses the reaction (3R)-hydroxytetradecanoyl-[ACP] = (2E)-tetradecenoyl-[ACP] + H2O. It carries out the reaction (2E)-tetradecenoyl-[ACP] + NADPH + H(+) = tetradecanoyl-[ACP] + NADP(+). The catalysed reaction is tetradecanoyl-[ACP] + malonyl-[ACP] + H(+) = 3-oxohexadecanoyl-[ACP] + holo-[ACP] + CO2. The enzyme catalyses 3-oxohexadecanoyl-[ACP] + NADPH + H(+) = (3R)-hydroxyhexadecanoyl-[ACP] + NADP(+). It catalyses the reaction (3R)-hydroxyhexadecanoyl-[ACP] = (2E)-hexadecenoyl-[ACP] + H2O. It carries out the reaction (2E)-hexadecenoyl-[ACP] + NADPH + H(+) = hexadecanoyl-[ACP] + NADP(+). The catalysed reaction is hexadecanoyl-[ACP] + malonyl-[ACP] + H(+) = 3-oxooctadecanoyl-[ACP] + holo-[ACP] + CO2. The enzyme catalyses 3-oxooctadecanoyl-[ACP] + NADPH + H(+) = (3R)-hydroxyoctadecanoyl-[ACP] + NADP(+). It catalyses the reaction (3R)-hydroxyoctadecanoyl-[ACP] = (2E)-octadecenoyl-[ACP] + H2O. It carries out the reaction (2E)-octadecenoyl-[ACP] + NADPH + H(+) = octadecanoyl-[ACP] + NADP(+). The catalysed reaction is tetradecanoyl-[ACP] + H2O = tetradecanoate + holo-[ACP] + H(+). The enzyme catalyses octadecanoyl-[ACP] + H2O = octadecanoate + holo-[ACP] + H(+). It functions in the pathway lipid metabolism; fatty acid biosynthesis. Activated by S-nitrosylation which promotes enzyme dimerization. Cerulenin, a potent non-competitive pharmacological inhibitor of FAS, binds covalently to the active site of the condensing enzyme region, inactivating a key enzyme step in fatty acid synthesis. Functionally, fatty acid synthetase is a multifunctional enzyme that catalyzes the de novo biosynthesis of long-chain saturated fatty acids starting from acetyl-CoA and malonyl-CoA in the presence of NADPH. This multifunctional protein contains 7 catalytic activities and a site for the binding of the prosthetic group 4'-phosphopantetheine of the acyl carrier protein ([ACP]) domain. In terms of biological role, (Microbial infection) Fatty acid synthetase activity is required for SARS coronavirus-2/SARS-CoV-2 replication. This Homo sapiens (Human) protein is Fatty acid synthase (FASN).